A 125-amino-acid polypeptide reads, in one-letter code: Large ribosomal subunit protein bL12 (125 aa).

The protein belongs to the bacterial ribosomal protein bL12 family. As to quaternary structure, homodimer. Part of the ribosomal stalk of the 50S ribosomal subunit. Forms a multimeric L10(L12)X complex, where L10 forms an elongated spine to which 2 to 4 L12 dimers bind in a sequential fashion. Binds GTP-bound translation factors.

Functionally, forms part of the ribosomal stalk which helps the ribosome interact with GTP-bound translation factors. Is thus essential for accurate translation. The sequence is that of Large ribosomal subunit protein bL12 from Cereibacter sphaeroides (strain ATCC 17023 / DSM 158 / JCM 6121 / CCUG 31486 / LMG 2827 / NBRC 12203 / NCIMB 8253 / ATH 2.4.1.) (Rhodobacter sphaeroides).